The chain runs to 284 residues: Pantothenate synthetase (284 aa).

Residue 30 to 37 (MGALHDGH) participates in ATP binding. The active-site Proton donor is His-37. Gln-61 contributes to the (R)-pantoate binding site. Gln-61 lines the beta-alanine pocket. 147-150 (GEKD) contributes to the ATP binding site. (R)-pantoate is bound at residue Gln-153. ATP contacts are provided by residues Val-176 and 184-187 (KSSR).

The protein belongs to the pantothenate synthetase family. In terms of assembly, homodimer.

The protein localises to the cytoplasm. The enzyme catalyses (R)-pantoate + beta-alanine + ATP = (R)-pantothenate + AMP + diphosphate + H(+). It functions in the pathway cofactor biosynthesis; (R)-pantothenate biosynthesis; (R)-pantothenate from (R)-pantoate and beta-alanine: step 1/1. In terms of biological role, catalyzes the condensation of pantoate with beta-alanine in an ATP-dependent reaction via a pantoyl-adenylate intermediate. The chain is Pantothenate synthetase from Chloroherpeton thalassium (strain ATCC 35110 / GB-78).